The sequence spans 430 residues: Serine--tRNA ligase (430 aa).

237–239 (TAE) is a binding site for L-serine. Position 268–270 (268–270 (RSE)) interacts with ATP. Glu-291 contacts L-serine. Residue 355-358 (EISS) participates in ATP binding. Ser-391 contributes to the L-serine binding site.

It belongs to the class-II aminoacyl-tRNA synthetase family. Type-1 seryl-tRNA synthetase subfamily. As to quaternary structure, homodimer. The tRNA molecule binds across the dimer.

The protein resides in the cytoplasm. It carries out the reaction tRNA(Ser) + L-serine + ATP = L-seryl-tRNA(Ser) + AMP + diphosphate + H(+). The enzyme catalyses tRNA(Sec) + L-serine + ATP = L-seryl-tRNA(Sec) + AMP + diphosphate + H(+). It participates in aminoacyl-tRNA biosynthesis; selenocysteinyl-tRNA(Sec) biosynthesis; L-seryl-tRNA(Sec) from L-serine and tRNA(Sec): step 1/1. Catalyzes the attachment of serine to tRNA(Ser). Is also able to aminoacylate tRNA(Sec) with serine, to form the misacylated tRNA L-seryl-tRNA(Sec), which will be further converted into selenocysteinyl-tRNA(Sec). The protein is Serine--tRNA ligase of Enterobacter sp. (strain 638).